A 620-amino-acid chain; its full sequence is Glutathione-regulated potassium-efflux system protein KefC (620 aa).

Transmembrane regions (helical) follow at residues 4 to 24 (HTLL…PIAV), 26 to 46 (LGLG…PWGL), 54 to 74 (SILH…GLEL), 90 to 110 (GALQ…FLGL), 114 to 134 (VAEL…MQAM), 149 to 169 (FAVL…IPLL), 178 to 198 (LGAF…VVLL), 218 to 238 (VFSA…EEVG), 270 to 290 (GLLL…GTLV), 294 to 314 (LRIL…LWLV), 327 to 347 (WFAV…GAAQ), and 359 to 379 (ALTL…VLLT). The RCK N-terminal domain maps to 399 to 518 (QPRVIVAGFG…AGVAMPERET (120 aa)). The tract at residues 599-620 (QGTAEGKHSGEVADEPEVKPSI) is disordered.

Belongs to the monovalent cation:proton antiporter 2 (CPA2) transporter (TC 2.A.37) family. KefC subfamily. Homodimer. Interacts with the regulatory subunit KefF.

It is found in the cell inner membrane. Pore-forming subunit of a potassium efflux system that confers protection against electrophiles. Catalyzes K(+)/H(+) antiport. This Salmonella agona (strain SL483) protein is Glutathione-regulated potassium-efflux system protein KefC.